Here is a 445-residue protein sequence, read N- to C-terminus: Argininosuccinate lyase (445 aa).

Belongs to the lyase 1 family. Argininosuccinate lyase subfamily.

It is found in the cytoplasm. It carries out the reaction 2-(N(omega)-L-arginino)succinate = fumarate + L-arginine. The protein operates within amino-acid biosynthesis; L-arginine biosynthesis; L-arginine from L-ornithine and carbamoyl phosphate: step 3/3. This chain is Argininosuccinate lyase, found in Xylella fastidiosa (strain Temecula1 / ATCC 700964).